Here is a 154-residue protein sequence, read N- to C-terminus: Fimbrial protein (154 aa).

The propeptide at 1–6 (MKAQKG) is leader sequence. At Phe7 the chain carries N-methylphenylalanine. A helical membrane pass occupies residues 7–27 (FTLIELMIVVAIIGILAAIAI). Cys133 and Cys151 are joined by a disulfide.

It belongs to the N-Me-Phe pilin family. As to quaternary structure, the pili are polar flexible filaments of about 5.4 nanometers diameter and 2.5 micrometers average length; they consist of only a single polypeptide chain arranged in a helical configuration of five subunits per turn in the assembled pilus.

It localises to the fimbrium. It is found in the membrane. In Pseudomonas aeruginosa, this protein is Fimbrial protein (pilA).